The sequence spans 251 residues: Adenosine 5'-phosphosulfate reductase (251 aa).

Residues cysteine 121, cysteine 122, cysteine 204, and cysteine 207 each contribute to the [4Fe-4S] cluster site. The active-site Nucleophile; cysteine thiosulfonate intermediate is cysteine 232.

The protein belongs to the PAPS reductase family. CysH subfamily. Requires [4Fe-4S] cluster as cofactor.

Its subcellular location is the cytoplasm. The catalysed reaction is [thioredoxin]-disulfide + sulfite + AMP + 2 H(+) = adenosine 5'-phosphosulfate + [thioredoxin]-dithiol. Its pathway is sulfur metabolism; hydrogen sulfide biosynthesis; sulfite from sulfate. Catalyzes the formation of sulfite from adenosine 5'-phosphosulfate (APS) using thioredoxin as an electron donor. This Sinorhizobium fredii (strain NBRC 101917 / NGR234) protein is Adenosine 5'-phosphosulfate reductase.